The following is a 299-amino-acid chain: Triplex capsid protein 1 (299 aa).

Belongs to the herpesviridae TRX1 protein family. As to quaternary structure, interacts with TRX2, MCP and capsid vertex component 2/CVC2.

Its subcellular location is the virion. The protein localises to the host nucleus. Structural component of the T=16 icosahedral capsid. The capsid is composed of pentamers and hexamers of major capsid protein/MCP, which are linked together by heterotrimers called triplexes. These triplexes are formed by a single molecule of triplex protein 1/TRX1 and two copies of triplex protein 2/TRX2. Additionally, TRX1 is required for efficient transport of TRX2 to the nucleus, which is the site of capsid assembly. The protein is Triplex capsid protein 1 of Homo sapiens (Human).